The chain runs to 683 residues: Translation initiation factor IF-2 (683 aa).

Residues 182 to 351 form the tr-type G domain; that stretch reads KRPPVVTVMG…ILTAEMEELK (170 aa). Positions 191 to 198 are G1; sequence GHVDHGKT. Position 191–198 (191–198) interacts with GTP; the sequence is GHVDHGKT. The segment at 216–220 is G2; sequence GITQH. The interval 237–240 is G3; the sequence is DTPG. GTP-binding positions include 237-241 and 291-294; these read DTPGH and NKID. A G4 region spans residues 291–294; it reads NKID. A G5 region spans residues 327 to 329; that stretch reads SAH.

Belongs to the TRAFAC class translation factor GTPase superfamily. Classic translation factor GTPase family. IF-2 subfamily.

The protein resides in the cytoplasm. Its function is as follows. One of the essential components for the initiation of protein synthesis. Protects formylmethionyl-tRNA from spontaneous hydrolysis and promotes its binding to the 30S ribosomal subunits. Also involved in the hydrolysis of GTP during the formation of the 70S ribosomal complex. The chain is Translation initiation factor IF-2 from Clostridium novyi (strain NT).